A 242-amino-acid chain; its full sequence is Type III pantothenate kinase (242 aa).

An ATP-binding site is contributed by 6–13 (DIGNSVAK). Substrate is bound by residues Tyr86 and 93–96 (GMDR). Catalysis depends on Asp95, which acts as the Proton acceptor. Asp116 is a binding site for K(+). Thr119 is an ATP binding site. Thr171 contacts substrate.

This sequence belongs to the type III pantothenate kinase family. Homodimer. It depends on NH4(+) as a cofactor. K(+) is required as a cofactor.

Its subcellular location is the cytoplasm. The enzyme catalyses (R)-pantothenate + ATP = (R)-4'-phosphopantothenate + ADP + H(+). Its pathway is cofactor biosynthesis; coenzyme A biosynthesis; CoA from (R)-pantothenate: step 1/5. Functionally, catalyzes the phosphorylation of pantothenate (Pan), the first step in CoA biosynthesis. The protein is Type III pantothenate kinase of Phocaeicola vulgatus (strain ATCC 8482 / DSM 1447 / JCM 5826 / CCUG 4940 / NBRC 14291 / NCTC 11154) (Bacteroides vulgatus).